Consider the following 83-residue polypeptide: Alpha-conotoxin QcIA (83 aa).

A signal peptide spans 1–21; that stretch reads MGMRMMFTLFLLAVLSTTVVS. The propeptide occupies 22-48; that stretch reads FTLDRASNGRDAAADSKAADQIAQTVR. Cystine bridges form between C51–C57 and C52–C65. The ser-Xaa-Pro motif, crucial for potent interaction with nAChR stretch occupies residues 53–55; that stretch reads SNP. The propeptide occupies 66 to 83; the sequence is RRTLMLQNPLNHDMSPSA.

This sequence belongs to the conotoxin A superfamily. In terms of tissue distribution, expressed by the venom duct.

Its subcellular location is the secreted. Its function is as follows. Alpha-conotoxins bind to the nicotinic acetylcholine receptors (nAChR) and inhibit them. A synthetic amidated version of this toxin potently and preferentially antagonizes neuronal rat alpha-3-beta-2 (IC(50)=55.7 nM) and alpha-6/alpha-3-beta-4 (IC(50)=90.69 nM) nAChRs. This is Alpha-conotoxin QcIA from Conus quercinus (Oak cone).